Consider the following 308-residue polypeptide: Methionine synthase (308 aa).

Zn(2+) is bound by residues H201, C203, E224, and C285.

Belongs to the archaeal MetE family. The cofactor is Zn(2+).

Its pathway is amino-acid biosynthesis; L-methionine biosynthesis via de novo pathway. Its function is as follows. Catalyzes the transfer of a methyl group to L-homocysteine resulting in methionine formation. Can use methylcobalamin and methylcobinamide as methyl donors, but methylcobalamin is not considered to be the physiological substrate. The protein is Methionine synthase of Methanothermobacter thermautotrophicus (strain ATCC 29096 / DSM 1053 / JCM 10044 / NBRC 100330 / Delta H) (Methanobacterium thermoautotrophicum).